Reading from the N-terminus, the 269-residue chain is Intercellular adhesion molecule 4 (269 aa).

The signal sequence occupies residues 1 to 20 (SLFPLSLLFFLAAAYPGVGS). Residues 21-238 (ALGRRTKRAQ…MLAWSSAPTA (218 aa)) are Extracellular-facing. 2 Ig-like C2-type domains span residues 60–122 (GKSV…TRWA) and 144–215 (GRKY…LNLD). N-linked (GlcNAc...) asparagine glycans are attached at residues Asn66, Asn76, Asn188, and Asn221. Cystine bridges form between Cys67/Cys111, Cys67/Cys115, Cys71/Cys115, and Cys151/Cys208. The helical transmembrane segment at 239–259 (LASVSIAALVGILLTVGAAYL) threads the bilayer. The Cytoplasmic portion of the chain corresponds to 260-269 (CKCLAMKSQA).

This sequence belongs to the immunoglobulin superfamily. ICAM family. Post-translationally, N- and O-glycosylated.

It localises to the cell membrane. Its function is as follows. ICAM proteins are ligands for the leukocyte adhesion protein LFA-1 (integrin alpha-L/beta-2). ICAM4 is also a ligand for alpha-4/beta-1 and alpha-V integrins. This chain is Intercellular adhesion molecule 4 (ICAM4), found in Pan troglodytes (Chimpanzee).